The following is a 142-amino-acid chain: Nucleoside diphosphate kinase (142 aa).

ATP-binding residues include Lys-11, Phe-59, Arg-87, Thr-93, Arg-104, and Asn-114. The Pros-phosphohistidine intermediate role is filled by His-117.

The protein belongs to the NDK family. Homotetramer. It depends on Mg(2+) as a cofactor.

It localises to the cytoplasm. It carries out the reaction a 2'-deoxyribonucleoside 5'-diphosphate + ATP = a 2'-deoxyribonucleoside 5'-triphosphate + ADP. The enzyme catalyses a ribonucleoside 5'-diphosphate + ATP = a ribonucleoside 5'-triphosphate + ADP. In terms of biological role, major role in the synthesis of nucleoside triphosphates other than ATP. The ATP gamma phosphate is transferred to the NDP beta phosphate via a ping-pong mechanism, using a phosphorylated active-site intermediate. The protein is Nucleoside diphosphate kinase of Hahella chejuensis (strain KCTC 2396).